The primary structure comprises 1087 residues: Exportin-7 (1087 aa).

Alanine 2 bears the N-acetylalanine mark. The Importin N-terminal domain occupies alanine 30–threonine 96. Serine 570 carries the post-translational modification Phosphoserine.

Belongs to the exportin family. In terms of assembly, binds to nucleoporins. Found in a complex with XPO7, EIF4A1, ARHGAP1, VPS26A, VPS29, VPS35 and SFN. Interacts with ARHGAP1 and SFN. Interacts with Ran and cargo proteins in a GTP-dependent manner. As to expression, highly expressed in testis and spleen, moderate in kidney and liver and low in heart, brain, lung and skeletal muscle.

The protein resides in the cytoplasm. Its subcellular location is the nucleus. Mediates the nuclear export of proteins (cargos) with broad substrate specificity. In the nucleus binds cooperatively to its cargo and to the GTPase Ran in its active GTP-bound form. Docking of this trimeric complex to the nuclear pore complex (NPC) is mediated through binding to nucleoporins. Upon transit of a nuclear export complex into the cytoplasm, disassembling of the complex and hydrolysis of Ran-GTP to Ran-GDP (induced by RANBP1 and RANGAP1, respectively) cause release of the cargo from the export receptor. XPO7 then return to the nuclear compartment and mediate another round of transport. The directionality of nuclear export is thought to be conferred by an asymmetric distribution of the GTP- and GDP-bound forms of Ran between the cytoplasm and nucleus. This is Exportin-7 (Xpo7) from Mus musculus (Mouse).